The primary structure comprises 81 residues: ATP synthase subunit c, chloroplastic (81 aa).

2 helical membrane passes run 3–23 (PIISAASVIAAGLAVGLASIG) and 57–77 (LAFMEALTIYGLVVALALLFA).

Belongs to the ATPase C chain family. As to quaternary structure, F-type ATPases have 2 components, F(1) - the catalytic core - and F(0) - the membrane proton channel. F(1) has five subunits: alpha(3), beta(3), gamma(1), delta(1), epsilon(1). F(0) has four main subunits: a(1), b(1), b'(1) and c(10-14). The alpha and beta chains form an alternating ring which encloses part of the gamma chain. F(1) is attached to F(0) by a central stalk formed by the gamma and epsilon chains, while a peripheral stalk is formed by the delta, b and b' chains.

It localises to the plastid. The protein localises to the chloroplast thylakoid membrane. Its function is as follows. F(1)F(0) ATP synthase produces ATP from ADP in the presence of a proton or sodium gradient. F-type ATPases consist of two structural domains, F(1) containing the extramembraneous catalytic core and F(0) containing the membrane proton channel, linked together by a central stalk and a peripheral stalk. During catalysis, ATP synthesis in the catalytic domain of F(1) is coupled via a rotary mechanism of the central stalk subunits to proton translocation. In terms of biological role, key component of the F(0) channel; it plays a direct role in translocation across the membrane. A homomeric c-ring of between 10-14 subunits forms the central stalk rotor element with the F(1) delta and epsilon subunits. The sequence is that of ATP synthase subunit c, chloroplastic from Welwitschia mirabilis (Tree tumbo).